The sequence spans 190 residues: Hypoxanthine/guanine phosphoribosyltransferase (190 aa).

It belongs to the purine/pyrimidine phosphoribosyltransferase family. Archaeal HPRT subfamily. As to quaternary structure, homodimer.

The protein resides in the cytoplasm. The catalysed reaction is IMP + diphosphate = hypoxanthine + 5-phospho-alpha-D-ribose 1-diphosphate. It carries out the reaction GMP + diphosphate = guanine + 5-phospho-alpha-D-ribose 1-diphosphate. It functions in the pathway purine metabolism; IMP biosynthesis via salvage pathway; IMP from hypoxanthine: step 1/1. In terms of biological role, catalyzes a salvage reaction resulting in the formation of IMP that is energically less costly than de novo synthesis. The chain is Hypoxanthine/guanine phosphoribosyltransferase from Methanosalsum zhilinae (strain DSM 4017 / NBRC 107636 / OCM 62 / WeN5) (Methanohalophilus zhilinae).